A 322-amino-acid polypeptide reads, in one-letter code: Cysteine protease yopT1 (322 aa).

Catalysis depends on residues C139, H258, and D274.

The protein belongs to the peptidase C58 family. As to quaternary structure, interacts with human ARHA.

It localises to the secreted. In terms of biological role, cysteine protease, which is translocated into infected cells and plays a central role in pathogenesis by cleaving the C-terminus end of the human small GTPase RhoA/ARHA, a regulator of cytoskeleton. Once cleaved, ARHA loses its lipid modification, and is released from the cell membrane, leading to the subsequent disruption of actin cytoskeleton of the host cell. This Yersinia enterocolitica protein is Cysteine protease yopT1 (yopT1).